The sequence spans 415 residues: L-cysteine:1D-myo-inositol 2-amino-2-deoxy-alpha-D-glucopyranoside ligase (415 aa).

Zn(2+) is bound at residue Cys47. Residues 47-50 (CGIT), Thr62, and 85-87 (NVT) each bind L-cysteinyl-5'-AMP. The short motif at 49–59 (ITPYDATHLGH) is the 'HIGH' region element. The 'ERGGDP' region motif lies at 190–195 (ERGGDP). Trp230 is an L-cysteinyl-5'-AMP binding site. Cys234 lines the Zn(2+) pocket. 252-254 (GSD) serves as a coordination point for L-cysteinyl-5'-AMP. Position 259 (His259) interacts with Zn(2+). Residue Ile286 participates in L-cysteinyl-5'-AMP binding. The 'KMSKS' region motif lies at 292 to 296 (KMSKS).

This sequence belongs to the class-I aminoacyl-tRNA synthetase family. MshC subfamily. In terms of assembly, monomer. Zn(2+) is required as a cofactor.

It carries out the reaction 1D-myo-inositol 2-amino-2-deoxy-alpha-D-glucopyranoside + L-cysteine + ATP = 1D-myo-inositol 2-(L-cysteinylamino)-2-deoxy-alpha-D-glucopyranoside + AMP + diphosphate + H(+). Its function is as follows. Catalyzes the ATP-dependent condensation of GlcN-Ins and L-cysteine to form L-Cys-GlcN-Ins. This Mycolicibacterium paratuberculosis (strain ATCC BAA-968 / K-10) (Mycobacterium paratuberculosis) protein is L-cysteine:1D-myo-inositol 2-amino-2-deoxy-alpha-D-glucopyranoside ligase (mshC).